The chain runs to 91 residues: UPF0335 protein BRADO1188 (91 aa).

The protein belongs to the UPF0335 family.

The chain is UPF0335 protein BRADO1188 from Bradyrhizobium sp. (strain ORS 278).